The following is a 79-amino-acid chain: Acyl carrier protein (79 aa).

Residues 1–76 (MEVFEEVRDV…DVVTYIENLN (76 aa)) enclose the Carrier domain. Serine 36 carries the O-(pantetheine 4'-phosphoryl)serine modification.

Belongs to the acyl carrier protein (ACP) family. In terms of processing, 4'-phosphopantetheine is transferred from CoA to a specific serine of apo-ACP by AcpS. This modification is essential for activity because fatty acids are bound in thioester linkage to the sulfhydryl of the prosthetic group.

It is found in the cytoplasm. It functions in the pathway lipid metabolism; fatty acid biosynthesis. Its function is as follows. Carrier of the growing fatty acid chain in fatty acid biosynthesis. The protein is Acyl carrier protein of Campylobacter hominis (strain ATCC BAA-381 / DSM 21671 / CCUG 45161 / LMG 19568 / NCTC 13146 / CH001A).